The sequence spans 512 residues: Capsid scaffolding protein (512 aa).

Residues H47, S115, and H131 each act as charge relay system in the active site. The interaction with pAP stretch occupies residues 264-282; it reads DLISTICSTTHTTHHDLVR. The tract at residues 376–407 is disordered; it reads RGSQKRCAPTDSDDEMSFPGDPDYTTKKKKRY. A Nuclear localization signal motif is present at residues 402 to 408; that stretch reads KKKKRYR. The interval 492 to 512 is interaction with major capsid protein; the sequence is DQSLLSLNKKLFVEALNKMDN.

The protein belongs to the herpesviridae capsid scaffolding protein family. In terms of assembly, homomultimer. Interacts with major capsid protein. Exists in a monomer-dimer equilibrium with the dimer being the active species. In terms of processing, capsid scaffolding protein is cleaved by assemblin after formation of the spherical procapsid. As a result, the capsid obtains its mature, icosahedral shape. Cleavages occur at two or more sites: release (R-site) and maturation (M-site).

Its subcellular location is the host cytoplasm. It localises to the host nucleus. It carries out the reaction Cleaves -Ala-|-Ser- and -Ala-|-Ala- bonds in the scaffold protein.. In terms of biological role, acts as a scaffold protein by binding major capsid protein in the cytoplasm, inducing the nuclear localization of both proteins. Multimerizes in the nucleus such as major capsid protein forms the icosahedral T=16 capsid. Autocatalytic cleavage releases the assembly protein, and subsequently abolishes interaction with major capsid protein. Cleavages products are evicted from the capsid before or during DNA packaging. Its function is as follows. Protease that plays an essential role in virion assembly within the nucleus. Catalyzes the cleavage of the assembly protein after formation of the spherical procapsid. By that cleavage, the capsid matures and gains its icosahedral shape. The cleavage sites seem to include -Ala-Ser-, -Ala-Ala-, as well as Ala-Thr bonds. Assemblin and cleavages products are evicted from the capsid before or during DNA packaging. Functionally, plays a major role in capsid assembly. Acts as a scaffold protein by binding major capsid protein. Multimerizes in the nucleus such as major capsid protein forms the icosahedral T=16 capsid. Cleaved by assemblin after capsid completion. The cleavages products are evicted from the capsid before or during DNA packaging. This is Capsid scaffolding protein (U53) from Human herpesvirus 7 (strain JI) (HHV-7).